Reading from the N-terminus, the 636-residue chain is Iron transport multicopper oxidase FET3 (636 aa).

The signal sequence occupies residues 1 to 21 (MTNALLSIAVLLFSMLSLAQA). Residues 22-559 (ETHTFNWTTG…AFIPTGFTKK (538 aa)) are Extracellular-facing. N27, N74, and N77 each carry an N-linked (GlcNAc...) asparagine glycan. 2 consecutive Plastocyanin-like domains span residues 32-146 (WDYR…IKDD) and 157-301 (SLSL…VYNK). Positions 81 and 83 each coordinate Cu cation. 2 N-linked (GlcNAc...) asparagine glycosylation sites follow: N88 and N113. Residues H126 and H128 each coordinate Cu cation. N-linked (GlcNAc...) asparagine glycans are attached at residues N194, N198, N244, N265, N292, N300, N359, and N381. Positions 362-502 (YTAPKVPTLM…GLGLVLVEDP (141 aa)) constitute a Plastocyanin-like 3 domain. Cu cation-binding residues include H413, H416, H418, H483, C484, H485, and H489. Residues 560-584 (GIIAMTFSCFAGILGIITIAIYGMM) traverse the membrane as a helical segment. Over 585–636 (DMEDATEKVIRDLHVDPEVLLNEVDENEERQVNEDRHSTEKHQFLTKAKRFF) the chain is Cytoplasmic.

This sequence belongs to the multicopper oxidase family. It depends on Cu cation as a cofactor.

It is found in the cell membrane. The enzyme catalyses 4 Fe(2+) + O2 + 4 H(+) = 4 Fe(3+) + 2 H2O. It catalyses the reaction 4 Cu(+) + O2 + 4 H(+) = 4 Cu(2+) + 2 H2O. In terms of biological role, iron transport multicopper ferroxidase required for Fe(2+) ion high affinity uptake. Required to oxidize Fe(2+) to Fe(3+), which is then transported into the cell via the ferric iron permease FTR1. Essential component of copper-dependent iron transport. Also has cuprous oxidase activity. The chain is Iron transport multicopper oxidase FET3 (FET3) from Saccharomyces cerevisiae (strain ATCC 204508 / S288c) (Baker's yeast).